The chain runs to 349 residues: 4-hydroxy-3-methylbut-2-en-1-yl diphosphate synthase (flavodoxin) (349 aa).

[4Fe-4S] cluster-binding residues include cysteine 265, cysteine 268, cysteine 300, and glutamate 307.

It belongs to the IspG family. The cofactor is [4Fe-4S] cluster.

It catalyses the reaction (2E)-4-hydroxy-3-methylbut-2-enyl diphosphate + oxidized [flavodoxin] + H2O + 2 H(+) = 2-C-methyl-D-erythritol 2,4-cyclic diphosphate + reduced [flavodoxin]. The protein operates within isoprenoid biosynthesis; isopentenyl diphosphate biosynthesis via DXP pathway; isopentenyl diphosphate from 1-deoxy-D-xylulose 5-phosphate: step 5/6. Its function is as follows. Converts 2C-methyl-D-erythritol 2,4-cyclodiphosphate (ME-2,4cPP) into 1-hydroxy-2-methyl-2-(E)-butenyl 4-diphosphate. The chain is 4-hydroxy-3-methylbut-2-en-1-yl diphosphate synthase (flavodoxin) from Thermodesulfovibrio yellowstonii (strain ATCC 51303 / DSM 11347 / YP87).